The primary structure comprises 160 residues: Succinate dehydrogenase assembly factor 2-B, mitochondrial (160 aa).

A mitochondrion-targeting transit peptide spans 1–23 (MLRQLKLTLNISRWIFMPWQRHA).

Belongs to the SDHAF2 family. Interacts with the flavoprotein subunit within the SDH catalytic dimer.

It localises to the mitochondrion matrix. Functionally, plays an essential role in the assembly of succinate dehydrogenase (SDH), an enzyme complex (also referred to as respiratory complex II) that is a component of both the tricarboxylic acid (TCA) cycle and the mitochondrial electron transport chain, and which couples the oxidation of succinate to fumarate with the reduction of ubiquinone (coenzyme Q) to ubiquinol. Required for flavinylation (covalent attachment of FAD) of the flavoprotein subunit of the SDH catalytic dimer. In Drosophila pseudoobscura pseudoobscura (Fruit fly), this protein is Succinate dehydrogenase assembly factor 2-B, mitochondrial.